A 413-amino-acid polypeptide reads, in one-letter code: MPSSISWGLLLLAALSCLGPGSLAQDAQETEASKQDQEHPASHRIAPHLAEFALSFYRVLARQSNTTNIFFSPVSIATALAMLSLGTKGDTHTQILEGLDFNLTEMAEADIHQGFQNLLQTLNRPNTQLQLTSGNGLFIDRNLKLLDKFLEDVKSLYHSEAFSTNFTNTQEARQQINSYVEKGTQGKIVELLKELDRDTVLALVNYIFFKGKWKQPFNEEQTREKDFHVDEATTVRVPMMNRLGMFHLHHCSTLASWVLQMDYLGNATAIFLLPDKGKMQHLEDTVTTEILTKFLKNRQTTKSQLYFPKVSISGTYDLKDVLSSLGITKVFSSEADLSGVTEEAPLSVSKALHKAVLDIDEEGTEAAGGTVLGNIRSTLRYEVIFDRPFLVVIYEHHTKSPLFVGKVVNPTQQ.

A signal peptide spans 1–24 (MPSSISWGLLLLAALSCLGPGSLA). Residue Gln25 is modified to Pyrrolidone carboxylic acid. N-linked (GlcNAc...) asparagine glycosylation is found at Asn65, Asn102, Asn165, and Asn266. The tract at residues 368–387 (GGTVLGNIRSTLRYEVIFDR) is RCL.

The protein belongs to the serpin family. As to expression, expressed in liver.

This Tamias sibiricus (Siberian chipmunk) protein is Alpha-1-antitrypsin-like protein CM55-ST.